Here is a 305-residue protein sequence, read N- to C-terminus: MGLAGRDLLTLADLSSAEVLEILELAATLKSGQTTVHCPKTLGLIFSKSSTRTRVSFSAAIMQMGGQVLDLNPNVTQVGRGEPIADTARVLSRYLDALAIRTFAQQDLEEYAHYADIPVINALTDDYHPCQILADLQTIQENFGQWQDLTLTYLGDGNNVAHSLLLGCAQVGMNVRIACPPDYQPQERIVAKAQQIAGDRAKVEILHDPIAASQGAHVLYTDVWASMGQEEEAQARVKAFTPYQLNQALLEKADPAAIVLHCLPAHREEEITAEVLEGSQSRVWDQAENRLHAQKAVLALLLGAI.

Residues serine 50 to threonine 53, glutamine 77, arginine 101, and histidine 128 to glutamine 131 each bind carbamoyl phosphate. Residues asparagine 159, aspartate 222, and serine 226 to methionine 227 each bind L-ornithine. Residues cysteine 262–leucine 263 and arginine 290 each bind carbamoyl phosphate.

Belongs to the aspartate/ornithine carbamoyltransferase superfamily. OTCase family.

Its subcellular location is the cytoplasm. The catalysed reaction is carbamoyl phosphate + L-ornithine = L-citrulline + phosphate + H(+). Its pathway is amino-acid biosynthesis; L-arginine biosynthesis; L-arginine from L-ornithine and carbamoyl phosphate: step 1/3. Functionally, reversibly catalyzes the transfer of the carbamoyl group from carbamoyl phosphate (CP) to the N(epsilon) atom of ornithine (ORN) to produce L-citrulline. This is Ornithine carbamoyltransferase from Synechococcus elongatus (strain ATCC 33912 / PCC 7942 / FACHB-805) (Anacystis nidulans R2).